The following is a 539-amino-acid chain: T-complex protein 1 subunit zeta (539 aa).

This sequence belongs to the TCP-1 chaperonin family. As to quaternary structure, heterooligomeric complex of about 850 to 900 kDa that forms two stacked rings, 12 to 16 nm in diameter.

It localises to the cytoplasm. Functionally, molecular chaperone; assists the folding of proteins upon ATP hydrolysis. Known to play a role, in vitro, in the folding of actin and tubulin. The polypeptide is T-complex protein 1 subunit zeta (cct-6) (Caenorhabditis elegans).